The chain runs to 763 residues: Phosphoglycerol transferase I (763 aa).

4 helical membrane-spanning segments follow: residues 4–19, 26–48, 76–98, and 105–127; these read LLSFALFLASVLIYAW, WWFAATLTVLGLFVVLNITLFAS, YILPGIGIVLGLTAVFGALGWIL, and PHHFGYSLLALLLALGSVDASPA.

This sequence belongs to the OpgB family.

It localises to the cell inner membrane. It carries out the reaction a phosphatidylglycerol + a membrane-derived-oligosaccharide D-glucose = a 1,2-diacyl-sn-glycerol + a membrane-derived-oligosaccharide 6-(glycerophospho)-D-glucose.. Its pathway is glycan metabolism; osmoregulated periplasmic glucan (OPG) biosynthesis. Transfers a phosphoglycerol residue from phosphatidylglycerol to the membrane-bound nascent glucan backbones. The polypeptide is Phosphoglycerol transferase I (Escherichia coli O157:H7).